Here is a 183-residue protein sequence, read N- to C-terminus: Ras-related protein Rap-2a (183 aa).

10–17 (GSGGVGKS) is a binding site for GTP. Positions 32-40 (YDPTIEDFY) match the Effector region motif. Residues 57-61 (DTAGT) and 116-119 (NKVD) each bind GTP. S-palmitoyl cysteine attachment occurs at residues Cys-176 and Cys-177. A Cysteine methyl ester modification is found at Cys-180. Cys-180 is lipidated: S-farnesyl cysteine. Positions 181 to 183 (NIQ) are cleaved as a propeptide — removed in mature form.

The protein belongs to the small GTPase superfamily. Ras family. Interacts with PLCE1. Interacts with ARHGAP29, SGSM1, SGSM2 and SGSM3. Interacts (GTP-bound form preferentially) with MAP4K4. Interacts with MINK1. Interacts with cytoskeletal actin. Interacts (GTP-bound form) with RUNDC3A. Interacts (GTP-bound form preferentially) with TNIK (via the CNH domain); the interaction is direct and recruits RAP2A to the E3 ubiquitin ligase NEDD4. Interacts with RGS14; the interaction is GTP-dependent. Ubiquitinated; undergoes 'Lys-63' monoubiquitination and diubiquitination by NEDD4. Multiple lysine residues are probably modified. Ubiquitination requires TNIK, prevents interaction with effectors and inactivates RAP2A. Ubiquitination by the ECS(RAB40B) complex leads to RAP2A localization to lamellipodia plasma membrane, activation, and regulation of sorting at early endosomes for recycling to the lamellipodia plasma membrane. In terms of processing, palmitoylated. Palmitoylation is required for association with recycling endosome membranes and activation of TNIK. Expressed in granular layer of the cerebellum, forebrain, striatum, layer V of the cortex, olfactory cortex, tubercules, subthalamic and hippocampus, particularly in the CA2 region, to a lesser extent in the CA1 region and the external layer of the dentate gyrus. Expressed in neurons.

Its subcellular location is the midbody. The protein localises to the cell projection. It is found in the lamellipodium membrane. The protein resides in the golgi apparatus. It localises to the recycling endosome membrane. Its subcellular location is the lysosome. It catalyses the reaction GTP + H2O = GDP + phosphate + H(+). Activated by the guanine nucleotide-exchange factors RAPGEF3 and RAPGEF4 in a cAMP-dependent manner. Nucleotide exchange is also specifically stimulated by RAPGEF5, RASGEF1A and RASGEF1B. Functionally, small GTP-binding protein which cycles between a GDP-bound inactive and a GTP-bound active form. In its active form interacts with and regulates several effectors including MAP4K4, MINK1 and TNIK. Part of a signaling complex composed of NEDD4, RAP2A and TNIK which regulates neuronal dendrite extension and arborization during development. More generally, it is part of several signaling cascades and may regulate cytoskeletal rearrangements, cell migration, cell adhesion and cell spreading. The chain is Ras-related protein Rap-2a from Mus musculus (Mouse).